Consider the following 471-residue polypeptide: V-type ATP synthase beta chain (471 aa).

It belongs to the ATPase alpha/beta chains family.

Functionally, produces ATP from ADP in the presence of a proton gradient across the membrane. The V-type beta chain is a regulatory subunit. This Streptococcus pyogenes serotype M49 (strain NZ131) protein is V-type ATP synthase beta chain.